Reading from the N-terminus, the 612-residue chain is MEFSKETRRLALQKMQERDLDLLIIGGGITGAGVALQAAASGLDTGLIEMQDFAEGTSSRSTKLVHGGLRYLKQFDVEVVSDTVSERAVVQQIAPHIPKPDPMLLPVYDEPGSTFSMFRLKVAMDLYDLLAGVSNTPAANKVLTKEEVLKREPDLKQEGLLGGGVYLDFRNNDARLVIENIKRANRDGALIASHVKAEDFLLDDKRQIIGVKARDLLTDQEIIIKAKLVINTTGPWSDEIRQFSHKGQPIHQMRPTKGVHLVVDRQKLPVSQPVYVDTGLNDGRMVFVLPREEKTYFGTTDTDYTGDLQHPQVTQEDVDYLLGIVNNRFPNANLTINDIESSWAGLRPLLSGNSASDYNGGNSGKLSDDSFDHLIDTVKAYINHEDSREAVEKAIKQVETSTSEKELDPSAVSRGSSFERDENGLFTLAGGKITDYRKMAEGALKVIIQVLKEDFGKSFKLINSTTYPVSGGEINPANVDSELEAYAQLGTLSGLSMDDARYLANLYGSNAPKVFALTRQLKAAEGLSLAETLSLHYAMDYEMALKPTDYFLRRTNHLLFMRDSLDALIVPVIEEMAKHFDWSTDEKVKQEEELRRVIAENDLSALKGQQED.

21-49 (DLLIIGGGITGAGVALQAAASGLDTGLIE) contacts FAD. Residues 399-408 (ETSTSEKELD) are compositionally biased toward basic and acidic residues. Residues 399 to 418 (ETSTSEKELDPSAVSRGSSF) form a disordered region.

This sequence belongs to the FAD-dependent glycerol-3-phosphate dehydrogenase family. Requires FAD as cofactor.

Its subcellular location is the cytoplasm. It catalyses the reaction sn-glycerol 3-phosphate + O2 = dihydroxyacetone phosphate + H2O2. The chain is Alpha-glycerophosphate oxidase (glpO) from Streptococcus pyogenes serotype M6 (strain ATCC BAA-946 / MGAS10394).